Here is a 92-residue protein sequence, read N- to C-terminus: SPbeta prophage-derived DNA-binding protein HU 2 (92 aa).

Thr-4 is modified (phosphothreonine). Residues 55 to 77 are disordered; that stretch reads RAARKGRNPQTGEEIDIPATKAP.

This sequence belongs to the bacterial histone-like protein family. In terms of assembly, homodimer.

Histone-like DNA-binding protein which is capable of wrapping DNA to stabilize it, and thus to prevent its denaturation under extreme environmental conditions. This Bacillus subtilis (strain 168) protein is SPbeta prophage-derived DNA-binding protein HU 2 (hup2).